The chain runs to 472 residues: MDRRNQITSVIREYLGRNPVPKEYEVLKKQTLKLSKIINFNKDTFFFLIKKNKYTFFKDLNVSDEEIQERIDEYFTKQRRARRLGNLLAIVELQKLLVSSFTKTLGVLTTKALEYYPSNIRLDYSFMEKIADNILDSYNVVKPSEEVKGRHKVSDLVLHVNKIMEEYLRRHSNSCICYGSYSLHLLNKKIEYGDIDILQTNARIFLINIAFLIRFITGRCVVLLKVPFLKNYVVIHDENLNHVMDSFNIKQSTMDKIPKIMIDNMYIVDPCIQLLNTIKMFSQIDRLEDIHTKFDKLSIRLGTLLEYTRYRYSILLDSESILDVKYKIDIQNRKIILDFKKYNLNYIKCYFFLDEDELKKLIRKTPKTDDYIDLEAVTNSEYMILNKTMYTYFSNTTLLRSKDELHPITINALTSHALLYHVITKKFYDDLLGDLIRSLMIVEKVPVYEIIPRDKKRGKHTIIDIEKDVVFH.

Catalysis depends on residues Asp-194 and Asp-196.

This sequence belongs to the poxviridae poly(A) polymerase catalytic subunit family. Heterodimer of a large (catalytic) subunit and a small (regulatory) subunit.

It catalyses the reaction RNA(n) + ATP = RNA(n)-3'-adenine ribonucleotide + diphosphate. Functionally, polymerase that creates the 3'-poly(A) tail of mRNA's. This chain is Poly(A) polymerase catalytic subunit (PAPL), found in Serinus (CNPV).